A 589-amino-acid polypeptide reads, in one-letter code: Transcription factor 4 (589 aa).

6 disordered regions span residues 1–124 (MTSR…SSSK), 138–163 (DGHH…MLGN), 184–239 (PSHS…SQTG), 254–297 (HTNN…EGPL), 384–492 (SLLP…MANN), and 556–589 (KRRE…MGQM). Phosphoserine occurs at positions 8 and 13. The span at 56–74 (GTLSPTKPGSQYYPYSSNN) shows a compositional bias: polar residues. Residues 136–157 (MQDGHHSSDPWSSSSGMNQPGY) are leucine-zipper. Residues 184–224 (PSHSSADINSSLPPMSTFHRSGTNHYSTSSCTPPANGTDSI) show a composition bias toward polar residues. Residues 255–266 (TNNSFSSNPSTP) are compositionally biased toward low complexity. The segment covering 283 to 292 (NGGQASSSPN) has biased composition (polar residues). S290 bears the Phosphoserine mark. Positions 380-403 (RGSHSLLPNQVPVPQLPVQSATSP) are class A specific domain. Composition is skewed to low complexity over residues 385–398 (LLPN…LPVQ) and 421–430 (GQSVSSGSSE). Residue S433 is modified to Phosphoserine. Composition is skewed to basic and acidic residues over residues 445–461 (KSSE…DIKS) and 477–492 (PEQK…MANN). Positions 486 to 539 (ERRMANNARERLRVRDINEAFKELGRMVQLHLKSDKPQTKLLILHQAVAVILSL) constitute a bHLH domain.

As to quaternary structure, efficient DNA binding requires dimerization with another bHLH protein. Forms homo- or heterooligomers with myogenin. Interacts with HIVEP2. Interacts with NEUROD2. Interacts with AGBL1.

Its subcellular location is the nucleus. Functionally, transcription factor that binds to the immunoglobulin enhancer Mu-E5/KE5-motif. Involved in the initiation of neuronal differentiation. Activates transcription by binding to the E box (5'-CANNTG-3'). Binds to the E-box present in the somatostatin receptor 2 initiator element (SSTR2-INR) to activate transcription. Interacts with the CCAAT displacement protein (CDP2) to bind the tyrosine hydroxylase enhancer. The sequence is that of Transcription factor 4 (Tcf4) from Rattus norvegicus (Rat).